The sequence spans 355 residues: Glycerol-1-phosphate dehydrogenase [NAD(P)+] (355 aa).

NAD(+) is bound by residues 101 to 105 (GKSID) and 123 to 126 (TAAS). D128 contributes to the substrate binding site. Residue S132 participates in NAD(+) binding. D175 lines the substrate pocket. Zn(2+) is bound by residues D175 and H255. Residue H259 participates in substrate binding. Residue H271 coordinates Zn(2+).

This sequence belongs to the glycerol-1-phosphate dehydrogenase family. As to quaternary structure, homodimer. It depends on Zn(2+) as a cofactor.

It is found in the cytoplasm. The enzyme catalyses sn-glycerol 1-phosphate + NAD(+) = dihydroxyacetone phosphate + NADH + H(+). The catalysed reaction is sn-glycerol 1-phosphate + NADP(+) = dihydroxyacetone phosphate + NADPH + H(+). The protein operates within membrane lipid metabolism; glycerophospholipid metabolism. Catalyzes the NAD(P)H-dependent reduction of dihydroxyacetonephosphate (DHAP or glycerone phosphate) to glycerol 1-phosphate (G1P). The G1P thus generated is used as the glycerophosphate backbone of phospholipids in the cellular membranes of Archaea. This Staphylothermus marinus (strain ATCC 43588 / DSM 3639 / JCM 9404 / F1) protein is Glycerol-1-phosphate dehydrogenase [NAD(P)+].